Consider the following 296-residue polypeptide: MAETSNDTPWTVMRLLEWTTDFFRKKGSESPRLDAEILLAHARGCQRIELYTSFDKVPEEEQRVAFRELVRRRGEGAPVAQLVGYREFYSISIRVDENVLVPRPETEHLVIEAIDQIKGRLSDRPSPTVLDIGTGSGAIAVAIAKSLPKTQVTAVDISLTALDIAKWNVENLKLSDRVTLLQSDLFDGLEPDQTFDVICSNPPYISQSEYDELPTTVREFEPRGALLSGPDGTEIIARLLNDSVQRLNDGGQLIIELSPMIAGVSKTLAEQNGGYKEIHLIKDLAGHERILSMQKA.

S-adenosyl-L-methionine contacts are provided by residues 133–137 (GTGSG), D156, and N201. Residue 201-204 (NPPY) participates in substrate binding.

Belongs to the protein N5-glutamine methyltransferase family. PrmC subfamily.

The enzyme catalyses L-glutaminyl-[peptide chain release factor] + S-adenosyl-L-methionine = N(5)-methyl-L-glutaminyl-[peptide chain release factor] + S-adenosyl-L-homocysteine + H(+). Its function is as follows. Methylates the class 1 translation termination release factors RF1/PrfA and RF2/PrfB on the glutamine residue of the universally conserved GGQ motif. The polypeptide is Release factor glutamine methyltransferase (Rhodopirellula baltica (strain DSM 10527 / NCIMB 13988 / SH1)).